The primary structure comprises 328 residues: Delta-aminolevulinic acid dehydratase (328 aa).

The active-site Schiff-base intermediate with substrate is Lys-200. Residues Arg-210 and Lys-222 each coordinate 5-aminolevulinate. Glu-238 provides a ligand contact to Mg(2+). Catalysis depends on Lys-253, which acts as the Schiff-base intermediate with substrate. Residues Ser-279 and Tyr-318 each contribute to the 5-aminolevulinate site.

Belongs to the ALAD family. As to quaternary structure, homooctamer.

The enzyme catalyses 2 5-aminolevulinate = porphobilinogen + 2 H2O + H(+). It participates in porphyrin-containing compound metabolism; protoporphyrin-IX biosynthesis; coproporphyrinogen-III from 5-aminolevulinate: step 1/4. With respect to regulation, stimulated by magnesium, inhibited by zinc. Its function is as follows. Catalyzes an early step in the biosynthesis of tetrapyrroles. Binds two molecules of 5-aminolevulinate per subunit, each at a distinct site, and catalyzes their condensation to form porphobilinogen. The chain is Delta-aminolevulinic acid dehydratase (hemB) from Chlorobaculum parvum (strain DSM 263 / NCIMB 8327) (Chlorobium vibrioforme subsp. thiosulfatophilum).